The primary structure comprises 661 residues: Serine/threonine-protein phosphatase rdgC (661 aa).

An IQ domain is found at 7–32 (RAAIFIQKWYRRHQARREMQRRCNWQ). Residues 105–413 (IDLLIDVFRK…HFVQYISAAS (309 aa)) form a catalytic region. Residues D158, H160, D187, and N219 each coordinate Mn(2+). Catalysis depends on H220, which acts as the Proton donor. Mn(2+) contacts are provided by H271 and H360. EF-hand domains follow at residues 441–476 (DHRD…VTKL), 526–561 (ANKA…LVAH), and 566–601 (YSKA…SDLH). Residues D539, D541, S543, E545, E550, D579, N581, D583, K585, and E590 each coordinate Ca(2+). The segment at 606–625 (QDENIRRRSTGRPSVAKTAT) is disordered.

The protein belongs to the PPP phosphatase family. It depends on Mn(2+) as a cofactor. In terms of tissue distribution, expressed in the visual system of the fly, as well as in the mushroom bodies of the central brain.

It carries out the reaction O-phospho-L-seryl-[protein] + H2O = L-seryl-[protein] + phosphate. The enzyme catalyses O-phospho-L-threonyl-[protein] + H2O = L-threonyl-[protein] + phosphate. Phosphatase required to prevent light-induced retinal degeneration. This is Serine/threonine-protein phosphatase rdgC (rdgC) from Drosophila melanogaster (Fruit fly).